The primary structure comprises 236 residues: Ubiquinone biosynthesis O-methyltransferase (236 aa).

Arg39, Gly59, Asp80, and Met124 together coordinate S-adenosyl-L-methionine.

The protein belongs to the methyltransferase superfamily. UbiG/COQ3 family.

The catalysed reaction is a 3-demethylubiquinol + S-adenosyl-L-methionine = a ubiquinol + S-adenosyl-L-homocysteine + H(+). The enzyme catalyses a 3-(all-trans-polyprenyl)benzene-1,2-diol + S-adenosyl-L-methionine = a 2-methoxy-6-(all-trans-polyprenyl)phenol + S-adenosyl-L-homocysteine + H(+). It functions in the pathway cofactor biosynthesis; ubiquinone biosynthesis. In terms of biological role, O-methyltransferase that catalyzes the 2 O-methylation steps in the ubiquinone biosynthetic pathway. This chain is Ubiquinone biosynthesis O-methyltransferase, found in Shewanella pealeana (strain ATCC 700345 / ANG-SQ1).